The chain runs to 1207 residues: DNA-directed RNA polymerase subunit beta' (1207 aa).

4 residues coordinate Zn(2+): cysteine 60, cysteine 62, cysteine 75, and cysteine 78. The Mg(2+) site is built by aspartate 450, aspartate 452, and aspartate 454. Cysteine 819, cysteine 893, cysteine 900, and cysteine 903 together coordinate Zn(2+).

It belongs to the RNA polymerase beta' chain family. In terms of assembly, the RNAP catalytic core consists of 2 alpha, 1 beta, 1 beta' and 1 omega subunit. When a sigma factor is associated with the core the holoenzyme is formed, which can initiate transcription. Requires Mg(2+) as cofactor. The cofactor is Zn(2+).

It catalyses the reaction RNA(n) + a ribonucleoside 5'-triphosphate = RNA(n+1) + diphosphate. Its function is as follows. DNA-dependent RNA polymerase catalyzes the transcription of DNA into RNA using the four ribonucleoside triphosphates as substrates. The sequence is that of DNA-directed RNA polymerase subunit beta' from Streptococcus pyogenes serotype M3 (strain SSI-1).